We begin with the raw amino-acid sequence, 272 residues long: Aquaporin-11 (272 aa).

The Cytoplasmic segment spans residues 1-14; the sequence is MTALRALWSEMQDT. A helical transmembrane segment spans residues 15–35; that stretch reads CTSLGLMLSVVLLAGLARVVA. Residues 36–47 are Lumenal-facing; that stretch reads RQQQLHRPMAHA. Residues 48–68 traverse the membrane as a helical segment; it reads FVLEFLATLQLCCCTHELLLL. The Cytoplasmic segment spans residues 69-75; the sequence is SEQEPAH. The chain crosses the membrane as a helical span at residues 76–96; the sequence is PTWPLTLIYFFTLVHGLTLVG. At 97–167 the chain is on the lumenal side; sequence TSSNPCGVMM…NPIQVDLPKA (71 aa). The NPC signature appears at 100–102; the sequence is NPC. The helical transmembrane segment at 168–188 threads the bilayer; the sequence is VIVEALCSFIFHSALLNFQEV. The Cytoplasmic portion of the chain corresponds to 189-195; the sequence is RPKLRIH. The helical transmembrane segment at 196 to 216 threads the bilayer; the sequence is LLAALITFLVYAGGSLTGAVF. The NPA signature appears at 217-219; that stretch reads NPA. Topologically, residues 217–235 are lumenal; that stretch reads NPALALSLHFKCFDEAFLQ. The chain crosses the membrane as a helical span at residues 236-256; the sequence is FFIVYWLAPSLGILLMILMFS. Residues 257 to 272 are Cytoplasmic-facing; sequence FFLPWLYNNHTINKKE.

Belongs to the MIP/aquaporin (TC 1.A.8) family. AQP11/AQP12 subfamily. In terms of assembly, homodimer; disulfide-linked. Homotetramer. Can also form homomultimer. In terms of processing, not glycosylated. Expressed in retina specifically at retinal Mueller glial cells.

Its subcellular location is the endoplasmic reticulum membrane. The protein localises to the cytoplasmic vesicle membrane. It is found in the cell membrane. It catalyses the reaction H2O(in) = H2O(out). The catalysed reaction is glycerol(in) = glycerol(out). The enzyme catalyses H2O2(out) = H2O2(in). In terms of biological role, channel protein that facilitates the transport of water, glycerol and hydrogen peroxide across membrane of cell or organelles guaranteeing intracellular homeostasis in several organes like liver, kidney and brain. In situation of stress, participates in endoplasmic reticulum (ER) homeostasis by regulating redox homeostasis through the transport of hydrogen peroxide across the endoplasmic reticulum membrane thereby regulating the oxidative stress through the NADPH oxidase 2 pathway. Plays a role by maintaining an environment suitable for translation or protein foldings in the ER lumen namely by participating in the PKD1 glycosylation processing resulting in regulation of PKD1 membrane trafficking thereby preventing the accumulation of unfolding protein in ER. Plays a role in the proximal tubule function by regulating its endosomal acidification. May play a role in postnatal kidney development. The polypeptide is Aquaporin-11 (Equus caballus (Horse)).